We begin with the raw amino-acid sequence, 89 residues long: Small ribosomal subunit protein uS15 (89 aa).

Positions 1 to 11 (MSIAAERKAEV) are enriched in basic and acidic residues. Positions 1–24 (MSIAAERKAEVIKTNATKAGDTGS) are disordered.

The protein belongs to the universal ribosomal protein uS15 family. In terms of assembly, part of the 30S ribosomal subunit. Forms a bridge to the 50S subunit in the 70S ribosome, contacting the 23S rRNA.

In terms of biological role, one of the primary rRNA binding proteins, it binds directly to 16S rRNA where it helps nucleate assembly of the platform of the 30S subunit by binding and bridging several RNA helices of the 16S rRNA. Its function is as follows. Forms an intersubunit bridge (bridge B4) with the 23S rRNA of the 50S subunit in the ribosome. In Bradyrhizobium diazoefficiens (strain JCM 10833 / BCRC 13528 / IAM 13628 / NBRC 14792 / USDA 110), this protein is Small ribosomal subunit protein uS15.